The sequence spans 245 residues: PF03932 family protein CutC (245 aa).

It belongs to the CutC family.

It localises to the cytoplasm. This is PF03932 family protein CutC from Caulobacter vibrioides (strain ATCC 19089 / CIP 103742 / CB 15) (Caulobacter crescentus).